The sequence spans 515 residues: MEHLHRKQITNTFTETFPGDLSMNNTTRQTPGVLYCSVLPTPVHHPQLLAWSADVAEMLGLESPVPEDVLILGGNTVNPTMKPYASCYAGHQFGNWAGQLGDGRAISLGFCSGKDSMEYELQLKGAGPTPYSRNSDGRAVLRSSLREYLMSEAMHYLGVPTTRALSLVSTGDAVLRDMFYNGHAAYEPGAVVLRVAPSFIRFGNFEILAERNNRDLSQQLCDWVITRYYPEIRGEDRVVQLFQAVAERTADMVVQWLRVGFVHGVMNTDNMSILGVTIDYGPYSFVDEYDARFTPNTTDLPGRRYAFGNQAAVAYWNLGRLANALAFLVPETDKLVAVLKNYQDVYETKYYTMMANKLGFDALREDDRLLIDSFEEMLRTVKPDMTMFYQLLIDLPADPGTAADVKQFFQSCFYTEADEALLHTCIAAYSKRIKTNTCSKEVSAEKMRAANPRFVLRNYILHEAIEKLEKGDDALLKKLEEYIKQPYSKNADEYFIKRPDWAAQKAGCSMLSCSS.

The ATP site is built by Gly101, Gly103, Arg104, Lys124, Asp136, Gly137, Arg194, and Arg201. Asp269 serves as the catalytic Proton acceptor. Mg(2+) contacts are provided by Asn270 and Asp279. An ATP-binding site is contributed by Asp279.

Belongs to the SELO family. It depends on Mg(2+) as a cofactor. Mn(2+) serves as cofactor.

It carries out the reaction L-seryl-[protein] + ATP = 3-O-(5'-adenylyl)-L-seryl-[protein] + diphosphate. The catalysed reaction is L-threonyl-[protein] + ATP = 3-O-(5'-adenylyl)-L-threonyl-[protein] + diphosphate. It catalyses the reaction L-tyrosyl-[protein] + ATP = O-(5'-adenylyl)-L-tyrosyl-[protein] + diphosphate. The enzyme catalyses L-histidyl-[protein] + UTP = N(tele)-(5'-uridylyl)-L-histidyl-[protein] + diphosphate. It carries out the reaction L-seryl-[protein] + UTP = O-(5'-uridylyl)-L-seryl-[protein] + diphosphate. The catalysed reaction is L-tyrosyl-[protein] + UTP = O-(5'-uridylyl)-L-tyrosyl-[protein] + diphosphate. Its function is as follows. Nucleotidyltransferase involved in the post-translational modification of proteins. It can catalyze the addition of adenosine monophosphate (AMP) or uridine monophosphate (UMP) to a protein, resulting in modifications known as AMPylation and UMPylation. This is Protein nucleotidyltransferase YdiU from Cytophaga hutchinsonii (strain ATCC 33406 / DSM 1761 / CIP 103989 / NBRC 15051 / NCIMB 9469 / D465).